A 246-amino-acid chain; its full sequence is Virulence plasmid protein pGP6-D (246 aa).

Belongs to the UPF0137 (pGP6-D) family.

The protein is Virulence plasmid protein pGP6-D of Chlamydia muridarum (strain MoPn / Nigg).